The primary structure comprises 1271 residues: Chitin synthase 4 (1271 aa).

Disordered stretches follow at residues 1-45 (MPPT…SFDH) and 58-117 (PNHP…ERPS). Polar residues predominate over residues 21-30 (APDTQESSPA). Transmembrane regions (helical) follow at residues 165 to 185 (WWIR…LVHL) and 201 to 221 (LAIF…IIFF). A glycan (N-linked (GlcNAc...) asparagine) is linked at asparagine 407. A helical membrane pass occupies residues 473-493 (LLLAFSIILIATIASKFLAAL). N-linked (GlcNAc...) asparagine glycans are attached at residues asparagine 713 and asparagine 836. 3 helical membrane-spanning segments follow: residues 867–887 (LLGT…VIVV), 894–914 (IPVI…LIFI), and 919–939 (FMLI…SVFL). Positions 999–1081 (HSESPAPSEK…DKSFIRGSKP (83 aa)) are disordered. The span at 1027 to 1037 (RSPSFHSSASE) shows a compositional bias: polar residues. Residues asparagine 1055 and asparagine 1161 are each glycosylated (N-linked (GlcNAc...) asparagine). Residues 1213–1269 (EVQDEEVLDKLKTWLSKQDLMSVTKRQTREAIYTLFPNAGLQNRAGWLNEQIDKILS) form the DEK-C domain.

Belongs to the chitin synthase family.

Its subcellular location is the cell membrane. It carries out the reaction [(1-&gt;4)-N-acetyl-beta-D-glucosaminyl](n) + UDP-N-acetyl-alpha-D-glucosamine = [(1-&gt;4)-N-acetyl-beta-D-glucosaminyl](n+1) + UDP + H(+). In terms of biological role, polymerizes chitin, a structural polymer of the cell wall and septum, by transferring the sugar moiety of UDP-GlcNAc to the non-reducing end of the growing chitin polymer. Produces a large proportion of the chitin that is not deacetylated to chitosan. The polypeptide is Chitin synthase 4 (Cryptococcus neoformans var. grubii serotype A (strain H99 / ATCC 208821 / CBS 10515 / FGSC 9487) (Filobasidiella neoformans var. grubii)).